We begin with the raw amino-acid sequence, 436 residues long: UPF0597 protein YhaM (436 aa).

The protein belongs to the UPF0597 family.

This Shigella boydii serotype 18 (strain CDC 3083-94 / BS512) protein is UPF0597 protein YhaM.